The sequence spans 249 residues: MQWGHCGVKSASCSWMPSLSFLSVWLILSFSLPYCLGSPSQDGYWSFFSEWFAPRFSVRALPFTLPNYRRSYESLLPNCRPDVPQFAFKHPLGILWHMRVSHLIDEMVSRRIYQTMEHSGQAAWKYVVGEATLTKLSKLDIVTHFQHLAAVEADSCRFLSSRLVMLKNLAVGNVSLQYNTTLDRVELIFPTPGTRPKLTDFRQWLISVHASIFSSVASSVTLFIVLWLRIPALRYVFGFHWPTATHHSS.

Residues 1-35 (MQWGHCGVKSASCSWMPSLSFLSVWLILSFSLPYC) form the signal peptide. Over 36–207 (LGSPSQDGYW…LTDFRQWLIS (172 aa)) the chain is Virion surface. N-linked (GlcNAc...) asparagine; by host glycosylation is found at Asn173 and Asn179. A helical transmembrane segment spans residues 208 to 228 (VHASIFSSVASSVTLFIVLWL). Residues 229–249 (RIPALRYVFGFHWPTATHHSS) are Intravirion-facing.

As to quaternary structure, heterotrimer of GP2a, GP3, and GP4. The GP2a-GP3-GP4 complex associates with the E protein. Interacts with host CD163; this interaction plays a role in virus entry into host cell.

It localises to the virion membrane. The protein localises to the host endoplasmic reticulum membrane. It is found in the host Golgi apparatus membrane. Its subcellular location is the secreted. In terms of biological role, minor envelope protein. Along with GP4, serves as the viral attachment protein responsible for mediating interactions with CD163 thereby playing a role in virus entry into susceptible host cells. The sequence is that of Glycoprotein 2a (GP2a) from Porcine reproductive and respiratory syndrome virus (isolate Pig/United States/SD 01-08/2001) (PRRSV).